Reading from the N-terminus, the 285-residue chain is Bifunctional protein FolD (285 aa).

Residues 164–166 (GRS), serine 189, and isoleucine 230 each bind NADP(+).

Belongs to the tetrahydrofolate dehydrogenase/cyclohydrolase family. In terms of assembly, homodimer.

The catalysed reaction is (6R)-5,10-methylene-5,6,7,8-tetrahydrofolate + NADP(+) = (6R)-5,10-methenyltetrahydrofolate + NADPH. It catalyses the reaction (6R)-5,10-methenyltetrahydrofolate + H2O = (6R)-10-formyltetrahydrofolate + H(+). It participates in one-carbon metabolism; tetrahydrofolate interconversion. Catalyzes the oxidation of 5,10-methylenetetrahydrofolate to 5,10-methenyltetrahydrofolate and then the hydrolysis of 5,10-methenyltetrahydrofolate to 10-formyltetrahydrofolate. In Oceanobacillus iheyensis (strain DSM 14371 / CIP 107618 / JCM 11309 / KCTC 3954 / HTE831), this protein is Bifunctional protein FolD.